The following is a 65-amino-acid chain: Metallothionein-like protein 3B (65 aa).

This sequence belongs to the metallothionein superfamily. Type 15 family. In terms of tissue distribution, expressed in leaves and rachis.

Metallothioneins have a high content of cysteine residues that bind various heavy metals. In Oryza sativa subsp. japonica (Rice), this protein is Metallothionein-like protein 3B (MT3B).